Consider the following 227-residue polypeptide: Probable GTP-binding protein EngB (227 aa).

The EngB-type G domain maps to 41-216 (GRPEVAFAGR…RAEIARFAVP (176 aa)). Residues 49-56 (GRSNVGKS), 76-80 (GRTKQ), 94-97 (DMPG), 161-164 (TKCD), and 195-197 (TSS) contribute to the GTP site. The Mg(2+) site is built by serine 56 and threonine 78.

This sequence belongs to the TRAFAC class TrmE-Era-EngA-EngB-Septin-like GTPase superfamily. EngB GTPase family. Mg(2+) is required as a cofactor.

Functionally, necessary for normal cell division and for the maintenance of normal septation. This is Probable GTP-binding protein EngB from Gluconobacter oxydans (strain 621H) (Gluconobacter suboxydans).